Here is a 195-residue protein sequence, read N- to C-terminus: Putative NADH dehydrogenase/NAD(P)H nitroreductase Bcep18194_B1060 (195 aa).

It belongs to the nitroreductase family. HadB/RutE subfamily. FMN serves as cofactor.

This Burkholderia lata (strain ATCC 17760 / DSM 23089 / LMG 22485 / NCIMB 9086 / R18194 / 383) protein is Putative NADH dehydrogenase/NAD(P)H nitroreductase Bcep18194_B1060.